Here is a 555-residue protein sequence, read N- to C-terminus: Hydroxylamine reductase (555 aa).

C5, C8, C17, and C23 together coordinate [4Fe-4S] cluster. Hybrid [4Fe-2O-2S] cluster-binding residues include H248, E272, C316, C408, C436, C461, E496, and K498. At C408 the chain carries Cysteine persulfide.

It belongs to the HCP family. [4Fe-4S] cluster is required as a cofactor. Hybrid [4Fe-2O-2S] cluster serves as cofactor.

The protein resides in the cytoplasm. It catalyses the reaction A + NH4(+) + H2O = hydroxylamine + AH2 + H(+). Catalyzes the reduction of hydroxylamine to form NH(3) and H(2)O. The protein is Hydroxylamine reductase of Natranaerobius thermophilus (strain ATCC BAA-1301 / DSM 18059 / JW/NM-WN-LF).